Here is a 1262-residue protein sequence, read N- to C-terminus: Separin homolog sep-1 (1262 aa).

A Peptidase C50 domain is found at 957–1051; that stretch reads VQNAYYILDP…SVRTIPQALG (95 aa). C1040 is a catalytic residue. The tract at residues 1147–1262 is disordered; it reads KDQRNLPQTP…ARTPSRSRNL (116 aa). 2 stretches are compositionally biased toward polar residues: residues 1151-1162 and 1177-1197; these read NLPQTPKTSART and FVTS…NKSP. The span at 1243-1262 shows a compositional bias: low complexity; the sequence is TPTTRTTRSSARTPSRSRNL.

Forms a complex with securin-like protein ify-1 (via C-terminus). Interaction with ify-1 stabilizes sep-1. Also maintains the complex in the cytoplasm during interphase and recruits it to chromosomes during the first meiotic division. Expressed in oocytes. Expressed in male germline. Expressed in spermatocytes but undetectable in spermatids (at protein level).

The protein resides in the cytoplasm. It localises to the chromosome. Its subcellular location is the cytoplasmic granule. It is found in the cytoskeleton. The protein localises to the microtubule organizing center. The protein resides in the centrosome. It localises to the spindle. Its subcellular location is the cleavage furrow. It is found in the midbody. The catalysed reaction is All bonds known to be hydrolyzed by this endopeptidase have arginine in P1 and an acidic residue in P4. P6 is often occupied by an acidic residue or by a hydroxy-amino-acid residue, the phosphorylation of which enhances cleavage.. With respect to regulation, probably maintained in an inactive state via its interaction with securin ify-1 which acts as a pseudosubstrate thereby blocking access to the catalytic site. Upon ify-1 degradation at the onset of anaphase, sep-1 is likely to become active. In addition, interaction with ify-1 stabilizes sep-1. Functionally, cysteine protease, which plays a central role in homologous chromosome separation during meiosis I and in sister chromatid separation during embryonic mitosis. Promotes chromosome/sister chromatid segregation by cleaving the scc-1 (mitosis) and rec-8 (meiosis) subunits of the cohesin complex at the onset of anaphase. May cleave histone H3-like protein cpar-1 during meiosis I metaphase-anaphase transition. Promotes cortical granule exocytosis after oocyte fertilization during the first meiotic anaphase. Essential for embryonic cytokinesis by regulating rab-11-positive vesicle trafficking at the plasma membrane at the cleavage furrow and midbody. Regulates centriole segregation during spermatocyte meiosis. Required for embryonic anterior-posterior axis formation. The protein is Separin homolog sep-1 of Caenorhabditis elegans.